Reading from the N-terminus, the 406-residue chain is Terminal uridylyltransferase 7 (406 aa).

The N-terminal 15 residues, 1-15, are a transit peptide targeting the mitochondrion; that stretch reads MNVAKREFIRGMMAH. UTP-binding positions include S54 and 64–65; that span reads SD. Residues D65 and D67 each contribute to the Mg(2+) site. UTP is bound by residues 138-142, K164, K168, and 181-183; these read GVENS and NSF.

Belongs to the DNA polymerase type-B-like family. As to quaternary structure, component of the mitochondrial RNA editing core complex-like (RECC-like), also known as the editosome-like complex; only a small proportion of MEAT1 associates with the complex. Interacts with RNA-editing ligase REL1. The cofactor is Mg(2+).

It is found in the mitochondrion matrix. The enzyme catalyses RNA(n) + UTP = RNA(n)-3'-uridine ribonucleotide + diphosphate. Its function is as follows. Terminal uridylyltransferase which, as part of the mitochondrial RNA editing core-like complex (RECC-like), is involved in the post-transcriptional editing of mitochondrial RNA, a process involving the addition and deletion of uridine (U) nucleotides in the pre-mRNA. Specifically, catalyzes the addition of U to single-stranded RNA with a preference for a 3'-terminal U and adds the number of Us specified by a guide RNA (gRNA) to precleaved double-stranded RNA editing substrates. Essential for insect and bloodstream developmental forms viability. This Trypanosoma brucei brucei protein is Terminal uridylyltransferase 7.